Here is a 97-residue protein sequence, read N- to C-terminus: Large ribosomal subunit protein uL23 (97 aa).

The protein belongs to the universal ribosomal protein uL23 family. In terms of assembly, part of the 50S ribosomal subunit. Contacts protein L29, and trigger factor when it is bound to the ribosome.

In terms of biological role, one of the early assembly proteins it binds 23S rRNA. One of the proteins that surrounds the polypeptide exit tunnel on the outside of the ribosome. Forms the main docking site for trigger factor binding to the ribosome. This is Large ribosomal subunit protein uL23 from Agrobacterium fabrum (strain C58 / ATCC 33970) (Agrobacterium tumefaciens (strain C58)).